A 224-amino-acid chain; its full sequence is Deoxyribose-phosphate aldolase (224 aa).

Residue D93 is the Proton donor/acceptor of the active site. K159 functions as the Schiff-base intermediate with acetaldehyde in the catalytic mechanism. The active-site Proton donor/acceptor is the K189.

The protein belongs to the DeoC/FbaB aldolase family. DeoC type 1 subfamily.

The protein resides in the cytoplasm. The catalysed reaction is 2-deoxy-D-ribose 5-phosphate = D-glyceraldehyde 3-phosphate + acetaldehyde. The protein operates within carbohydrate degradation; 2-deoxy-D-ribose 1-phosphate degradation; D-glyceraldehyde 3-phosphate and acetaldehyde from 2-deoxy-alpha-D-ribose 1-phosphate: step 2/2. Its function is as follows. Catalyzes a reversible aldol reaction between acetaldehyde and D-glyceraldehyde 3-phosphate to generate 2-deoxy-D-ribose 5-phosphate. The polypeptide is Deoxyribose-phosphate aldolase (Mycobacterium bovis (strain ATCC BAA-935 / AF2122/97)).